The following is a 375-amino-acid chain: Growth/differentiation factor 8 (375 aa).

Residues 1–18 form the signal peptide; it reads MQRLQICVYIYLFVLIVA. Positions 19 to 266 are excised as a propeptide; it reads GPVDLSENSE…VTDTPKRSRR (248 aa). Residue N71 is glycosylated (N-linked (GlcNAc...) asparagine). Cystine bridges form between C281–C340, C309–C372, and C313–C374.

It belongs to the TGF-beta family. In terms of assembly, homodimer; disulfide-linked. Interacts with WFIKKN2, leading to inhibit its activity. Interacts with FSTL3. Post-translationally, synthesized as large precursor molecule that undergoes proteolytic cleavage to generate an N-terminal propeptide and a disulfide linked C-terminal dimer, which is the biologically active molecule. The circulating form consists of a latent complex of the C-terminal dimer and other proteins, including its propeptide, which maintain the C-terminal dimer in a latent, inactive state. Ligand activation requires additional cleavage of the prodomain by a tolloid-like metalloproteinase.

Its subcellular location is the secreted. In terms of biological role, acts specifically as a negative regulator of skeletal muscle growth. This is Growth/differentiation factor 8 (MSTN) from Vulpes vulpes (Red fox).